We begin with the raw amino-acid sequence, 528 residues long: MKTVHSASYEILRRHGLTTVFGNPGSNELPFLKDFPEDFRYILGLHEGAVVGMADGFALASGRPAFVNLHAAAGTGNGMGALTNAWYSHSPLVITAGQQVRSMIGVEAMLANVDAGQLPKPLVKWSHEPACAQDVPRALSQAIQTASLPPRAPVYLSIPYDDWAQPAPAGVEHLAARQVSGAALPAPALLAELGERLSRSRNPVLVLGPDVDGANANGLAVELAEKLRMPAWVAPSASRCPFPTRHACFRGVLPAAIAGISRLLDGHDLILVVGAPVFRYHQFAPGDYLPAGAELVQVTCDPGEAARAPMGDALVGDIALTLEALLEQVRPSARPLPEALPRPPALAEEGGPLRPETVFDVIDALAPRDAIFVKESTSTVTAFWQRVEMREPGSYFFPAAGGLGFGLPAAVGAQLAQPRRQVIGIIGDGSANYGITALWSAAQYRVPAVFIILKNGTYGALRWFAGVLEVPDAPGLDVPGLDFCAIARGYGVEALHAATREELEGALKHALAADRPVLIEVPTQTIEP.

Mg(2+)-binding residues include Gln-117 and Leu-118. The interval Thr-377–Ala-460 is thiamine pyrophosphate binding. Asp-428, Asn-455, and Thr-457 together coordinate Ca(2+).

The protein belongs to the TPP enzyme family. In terms of assembly, homotetramer. Ca(2+) serves as cofactor. It depends on thiamine diphosphate as a cofactor. The cofactor is Mg(2+).

It catalyses the reaction phenylglyoxylate + H(+) = benzaldehyde + CO2. Its pathway is aromatic compound metabolism; (R)-mandelate degradation; benzoate from (R)-mandelate: step 3/4. In Pseudomonas aeruginosa (strain ATCC 15692 / DSM 22644 / CIP 104116 / JCM 14847 / LMG 12228 / 1C / PRS 101 / PAO1), this protein is Benzoylformate decarboxylase (mdlC).